Reading from the N-terminus, the 198-residue chain is Ribonuclease HII (198 aa).

The 185-residue stretch at 14–198 (GVIAGVDEVG…RNFAPISRAL (185 aa)) folds into the RNase H type-2 domain. The a divalent metal cation site is built by D20, E21, and D112.

This sequence belongs to the RNase HII family. It depends on Mn(2+) as a cofactor. Mg(2+) is required as a cofactor.

The protein resides in the cytoplasm. It carries out the reaction Endonucleolytic cleavage to 5'-phosphomonoester.. In terms of biological role, endonuclease that specifically degrades the RNA of RNA-DNA hybrids. The polypeptide is Ribonuclease HII (Wolbachia sp. subsp. Drosophila simulans (strain wRi)).